We begin with the raw amino-acid sequence, 713 residues long: Cyclomaltodextrin glucanotransferase (713 aa).

An N-terminal signal peptide occupies residues 1-27; it reads MKKISKLTTALALSLSLALSLLGPAHA. Residues 28–165 form an A1 region; the sequence is APDTSVSNKQ…NIKVIIDFAP (138 aa). Residues Asp54, Asn56, Asn59, and Asn60 each coordinate Ca(2+). Cys70 and Cys77 are disulfide-bonded. Ca(2+) contacts are provided by Gly78 and Asp80. A substrate-binding site is contributed by 127–128; sequence YW. Asn166 lines the Ca(2+) pocket. The tract at residues 166-229 is b; sequence NHTSPASLDQ…NLYDLADLNH (64 aa). His167 contributes to the substrate binding site. Residue Ile217 participates in Ca(2+) binding. Substrate is bound at residue 220–223; the sequence is NLYD. Residue Asp226 participates in Ca(2+) binding. The interval 230–433 is A2; that stretch reads NNSTVDTYLK…LRKSNPAIAY (204 aa). Arg254 serves as a coordination point for substrate. Asp256 acts as the Nucleophile in catalysis. 259–260 is a substrate binding site; the sequence is KH. His260 is a Ca(2+) binding site. The active-site Proton donor is the Glu284. Positions 354, 398, and 402 each coordinate substrate. The tract at residues 434–522 is c; sequence GTTQERWINN…GTAVWQYTTA (89 aa). Positions 523 to 609 are d; it reads VTAPTIGHVG…SNVHDNFEVL (87 aa). The IPT/TIG domain maps to 526 to 607; that stretch reads PTIGHVGPMM…TSSNVHDNFE (82 aa). Residues 608 to 713 enclose the CBM20 domain; the sequence is VLSGDQVSVR…TATINVNWQP (106 aa). An e region spans residues 610-713; sequence SGDQVSVRFV…TATINVNWQP (104 aa).

The protein belongs to the glycosyl hydrolase 13 family. In terms of assembly, monomer. It depends on Ca(2+) as a cofactor.

The protein localises to the secreted. It catalyses the reaction Cyclizes part of a (1-&gt;4)-alpha-D-glucan chain by formation of a (1-&gt;4)-alpha-D-glucosidic bond.. This chain is Cyclomaltodextrin glucanotransferase (cgt), found in Bacillus sp. (strain 17-1).